Reading from the N-terminus, the 145-residue chain is D-aminoacyl-tRNA deacylase (145 aa).

The short motif at 137–138 (GP) is the Gly-cisPro motif, important for rejection of L-amino acids element.

It belongs to the DTD family. In terms of assembly, homodimer.

It is found in the cytoplasm. It catalyses the reaction glycyl-tRNA(Ala) + H2O = tRNA(Ala) + glycine + H(+). The catalysed reaction is a D-aminoacyl-tRNA + H2O = a tRNA + a D-alpha-amino acid + H(+). In terms of biological role, an aminoacyl-tRNA editing enzyme that deacylates mischarged D-aminoacyl-tRNAs. Also deacylates mischarged glycyl-tRNA(Ala), protecting cells against glycine mischarging by AlaRS. Acts via tRNA-based rather than protein-based catalysis; rejects L-amino acids rather than detecting D-amino acids in the active site. By recycling D-aminoacyl-tRNA to D-amino acids and free tRNA molecules, this enzyme counteracts the toxicity associated with the formation of D-aminoacyl-tRNA entities in vivo and helps enforce protein L-homochirality. The protein is D-aminoacyl-tRNA deacylase of Salmonella typhi.